A 358-amino-acid chain; its full sequence is Probable D-xylulose reductase A (358 aa).

Positions 47, 72, and 73 each coordinate Zn(2+). 182–187 (GAGPVG) is an NAD(+) binding site.

This sequence belongs to the zinc-containing alcohol dehydrogenase family. Zn(2+) is required as a cofactor.

The catalysed reaction is xylitol + NAD(+) = D-xylulose + NADH + H(+). Its pathway is carbohydrate degradation; L-arabinose degradation via L-arabinitol; D-xylulose 5-phosphate from L-arabinose (fungal route): step 4/5. Xylitol dehydrogenase which catalyzes the conversion of xylitol to D-xylulose. Xylose is a major component of hemicelluloses such as xylan. Most fungi utilize D-xylose via three enzymatic reactions, xylose reductase (XR), xylitol dehydrogenase (XDH), and xylulokinase, to form xylulose 5-phosphate, which enters pentose phosphate pathway. In Neosartorya fischeri (strain ATCC 1020 / DSM 3700 / CBS 544.65 / FGSC A1164 / JCM 1740 / NRRL 181 / WB 181) (Aspergillus fischerianus), this protein is Probable D-xylulose reductase A (xdhA).